Reading from the N-terminus, the 430-residue chain is Oleandomycin glycosyltransferase (430 aa).

A disordered region spans residues 385-430 (GGTRRAADLIEAELPARHERQEPVGDRPNVGDRPAGVRSDRQRSAL). Positions 386–409 (GTRRAADLIEAELPARHERQEPVG) are enriched in basic and acidic residues.

This sequence belongs to the UDP-glycosyltransferase family.

Specifically inactivates oleandomycin via 2'-O-glycosylation using UDP-glucose. The protein is Oleandomycin glycosyltransferase (oleD) of Streptomyces antibioticus.